The primary structure comprises 125 residues: Large ribosomal subunit protein eL31 (125 aa).

It belongs to the eukaryotic ribosomal protein eL31 family. In terms of assembly, component of the large ribosomal subunit.

It is found in the cytoplasm. In terms of biological role, component of the large ribosomal subunit. The ribosome is a large ribonucleoprotein complex responsible for the synthesis of proteins in the cell. This chain is Large ribosomal subunit protein eL31 (rpl31), found in Xenopus laevis (African clawed frog).